The sequence spans 917 residues: Alanine--tRNA ligase (917 aa).

Residues His592, His596, Cys694, and His698 each coordinate Zn(2+).

This sequence belongs to the class-II aminoacyl-tRNA synthetase family. Zn(2+) serves as cofactor.

Its subcellular location is the cytoplasm. It carries out the reaction tRNA(Ala) + L-alanine + ATP = L-alanyl-tRNA(Ala) + AMP + diphosphate. Its function is as follows. Catalyzes the attachment of alanine to tRNA(Ala) in a two-step reaction: alanine is first activated by ATP to form Ala-AMP and then transferred to the acceptor end of tRNA(Ala). Also edits incorrectly charged Ser-tRNA(Ala) and Gly-tRNA(Ala) via its editing domain. The chain is Alanine--tRNA ligase from Sorangium cellulosum (strain So ce56) (Polyangium cellulosum (strain So ce56)).